Reading from the N-terminus, the 193-residue chain is Probable GTP-binding protein EngB (193 aa).

Positions 22 to 193 (QLPEFALAGR…EAWGALQKWM (172 aa)) constitute an EngB-type G domain. GTP-binding positions include 30-37 (GRSNVGKS), 57-61 (GKTQT), 75-78 (DVPG), 142-145 (TKAD), and 174-176 (FSA). Residues Ser-37 and Thr-59 each coordinate Mg(2+).

The protein belongs to the TRAFAC class TrmE-Era-EngA-EngB-Septin-like GTPase superfamily. EngB GTPase family. It depends on Mg(2+) as a cofactor.

Necessary for normal cell division and for the maintenance of normal septation. The chain is Probable GTP-binding protein EngB from Anoxybacillus flavithermus (strain DSM 21510 / WK1).